The following is an 889-amino-acid chain: Cytoplasmic aconitate hydratase (889 aa).

Residues Gln86 and 205–207 (DSH) each bind substrate. [4Fe-4S] cluster-binding residues include Cys437, Cys503, and Cys506. Residues Arg536, Arg541, Arg699, and 779–780 (SR) each bind substrate.

Belongs to the aconitase/IPM isomerase family. In terms of assembly, interacts (when associated with the 4Fe-4S) with FBXL5. Interacts with frataxin(81-210). Requires [4Fe-4S] cluster as cofactor.

The protein localises to the cytoplasm. The protein resides in the cytosol. The enzyme catalyses citrate = D-threo-isocitrate. Its function is as follows. Bifunctional iron sensor that switches between 2 activities depending on iron availability. Iron deprivation, promotes its mRNA binding activity through which it regulates the expression of genes involved in iron uptake, sequestration and utilization. Binds to iron-responsive elements (IRES) in the untranslated region of target mRNAs preventing for instance the translation of ferritin and aminolevulinic acid synthase and stabilizing the transferrin receptor mRNA. In terms of biological role, conversely, when cellular iron levels are high, binds a 4Fe-4S cluster which precludes RNA binding activity and promotes the aconitase activity, the isomerization of citrate to isocitrate via cis-aconitate. The polypeptide is Cytoplasmic aconitate hydratase (ACO1) (Bos taurus (Bovine)).